Here is a 244-residue protein sequence, read N- to C-terminus: uncharacterized protein (244 aa).

The 78-residue stretch at 1-78 (MKKRFIYHDE…PKFNFMDRYY (78 aa)) folds into the WGR domain.

This is an uncharacterized protein from Escherichia coli (strain K12).